The primary structure comprises 313 residues: E3 ubiquitin-protein ligase siah2 (313 aa).

The tract at residues 1 to 49 (MSRPSSAGPCASKPCGKQKQPPPPPPHAPSLPATISGGPGASAPPAPTA) is disordered. Pro residues predominate over residues 20–29 (QPPPPPPHAP). The RING-type zinc finger occupies 69 to 104 (CPVCFDYVLPPILQCQAGHLVCNQCRQKLSCCPTCR). The interval 119–311 (VASAVLFPCK…LGINVTISTC (193 aa)) is SBD. Residues 122–182 (AVLFPCKYAS…VMQHLTHSHK (61 aa)) form an SIAH-type zinc finger. Zn(2+) contacts are provided by Cys127, Cys134, His146, Cys150, Cys157, Cys164, His176, and His181.

It belongs to the SINA (Seven in absentia) family. Homodimer. Widely expressed in early embryos until stage 40. It is then expressed in brain, spinal cord and in the developing and mature eye.

Its subcellular location is the cytoplasm. The catalysed reaction is S-ubiquitinyl-[E2 ubiquitin-conjugating enzyme]-L-cysteine + [acceptor protein]-L-lysine = [E2 ubiquitin-conjugating enzyme]-L-cysteine + N(6)-ubiquitinyl-[acceptor protein]-L-lysine.. The protein operates within protein modification; protein ubiquitination. E3 ubiquitin-protein ligase that mediates ubiquitination and subsequent proteasomal degradation of target proteins. E3 ubiquitin ligases accept ubiquitin from an E2 ubiquitin-conjugating enzyme in the form of a thioester and then directly transfers the ubiquitin to targeted substrates. Involved in eye morphogenesis, probably triggers the ubiquitin-mediated degradation of different substrates. May play a role in the regulation of the cellular clock function. This chain is E3 ubiquitin-protein ligase siah2 (siah2), found in Xenopus laevis (African clawed frog).